The chain runs to 230 residues: Probable endonuclease C19F8.04c (230 aa).

The helical transmembrane segment at 10-27 threads the bilayer; the sequence is AIIGTGLITTSIGGFFFL. The TNase-like domain maps to 55-216; the sequence is KTMFGYVTRV…KKKKLSLWSQ (162 aa). Residue Arg-104 is part of the active site. Residue Asp-109 participates in Ca(2+) binding. Catalysis depends on residues Glu-112 and Arg-152.

The protein belongs to the LCL3 family.

Its subcellular location is the mitochondrion. It is found in the membrane. This chain is Probable endonuclease C19F8.04c, found in Schizosaccharomyces pombe (strain 972 / ATCC 24843) (Fission yeast).